We begin with the raw amino-acid sequence, 466 residues long: Ribosomal protein uS12 methylthiotransferase RimO (466 aa).

One can recognise an MTTase N-terminal domain in the interval 15-125 (PKVGFVSLGC…VMEAVHAALP (111 aa)). The [4Fe-4S] cluster site is built by Cys-24, Cys-60, Cys-89, Cys-156, Cys-160, and Cys-163. The region spanning 142–380 (LTPRHYAYLK…AKQAEISALR (239 aa)) is the Radical SAM core domain. In terms of domain architecture, TRAM spans 382–450 (EAKIGSVQQC…EHDLFGDALP (69 aa)).

Belongs to the methylthiotransferase family. RimO subfamily. Requires [4Fe-4S] cluster as cofactor.

The protein localises to the cytoplasm. The catalysed reaction is L-aspartate(89)-[ribosomal protein uS12]-hydrogen + (sulfur carrier)-SH + AH2 + 2 S-adenosyl-L-methionine = 3-methylsulfanyl-L-aspartate(89)-[ribosomal protein uS12]-hydrogen + (sulfur carrier)-H + 5'-deoxyadenosine + L-methionine + A + S-adenosyl-L-homocysteine + 2 H(+). Functionally, catalyzes the methylthiolation of an aspartic acid residue of ribosomal protein uS12. The sequence is that of Ribosomal protein uS12 methylthiotransferase RimO from Xanthomonas oryzae pv. oryzae (strain MAFF 311018).